Reading from the N-terminus, the 113-residue chain is Protein Wnt-10 (113 aa).

The O-palmitoleoyl serine; by PORCN moiety is linked to residue Ser-1. Cys-79 and Cys-94 are joined by a disulfide.

This sequence belongs to the Wnt family. Post-translationally, palmitoleoylation is required for efficient binding to frizzled receptors. Depalmitoleoylation leads to Wnt signaling pathway inhibition.

The protein resides in the secreted. It is found in the extracellular space. It localises to the extracellular matrix. In terms of biological role, ligand for members of the frizzled family of seven transmembrane receptors. Probable developmental protein. May be a signaling molecule which affects the development of discrete regions of tissues. Is likely to signal over only few cell diameters. This chain is Protein Wnt-10 (WNT-10), found in Eptatretus stoutii (Pacific hagfish).